A 273-amino-acid chain; its full sequence is HMP-PP phosphatase (273 aa).

The Nucleophile role is filled by Asp8. The Mg(2+) site is built by Asp8, Asp10, and Asp212.

This sequence belongs to the HAD-like hydrolase superfamily. Cof family. It depends on Mg(2+) as a cofactor.

It carries out the reaction 4-amino-2-methyl-5-(diphosphooxymethyl)pyrimidine + H2O = 4-amino-2-methyl-5-(phosphooxymethyl)pyrimidine + phosphate + H(+). Catalyzes the hydrolysis of 4-amino-2-methyl-5-hydroxymethylpyrimidine pyrophosphate (HMP-PP) to 4-amino-2-methyl-5-hydroxymethylpyrimidine phosphate (HMP-P). In Yersinia enterocolitica serotype O:8 / biotype 1B (strain NCTC 13174 / 8081), this protein is HMP-PP phosphatase.